A 392-amino-acid chain; its full sequence is Basic salivary proline-rich protein 1 (392 aa).

The signal sequence occupies residues 1-16; sequence MLLILLSVALLALSSA. The residue at position 17 (Gln-17) is a Pyrrolidone carboxylic acid. Over residues 19–28 the composition is skewed to polar residues; that stretch reads LNEDVSQEES. The segment at 19-392 is disordered; the sequence is LNEDVSQEES…QGGRPSRPPQ (374 aa). Residues 34-47 show a composition bias toward low complexity; that stretch reads GNPQGPSPQGGNKP. Ser-40 bears the Phosphoserine; alternate mark. Ser-40 is a glycosylation site (O-linked (Hex) serine; alternate). The span at 48-83 shows a compositional bias: pro residues; it reads QGPPPPPGKPQGPPPQGGNKPQGPPPPGKPQGPPPQ. 15 consecutive repeat copies span residues 53–72, 73–92, 93–112, 114–133, 134–153, 154–173, 175–194, 195–214, 215–234, 236–255, 256–275, 276–295, 297–316, 317–336, and 338–357. The 15 X 20 AA approximate tandem repeats of P-P-G-K-P-Q-G-P-P-[PAQ]-Q-[GE]-[GD]-[NKS]-[KSQRN]-[PRQS]-[QS] [GPS]-[PQAR]-[PSR] stretch occupies residues 53–357; that stretch reads PPGKPQGPPP…QEGNNPQGPP (305 aa). O-linked (HexNAc...) serine glycosylation is present at Ser-87. A compositionally biased stretch (pro residues) spans 91 to 144; the sequence is RSPPGKPQGPPPQGGNQPQGPPPPPGKPQGPPPQGGNKPQGPPPPGKPQGPPPQ. Ser-92 is subject to Phosphoserine. Ser-150 carries the phosphoserine; alternate modification. An O-linked (Hex) serine; alternate glycan is attached at Ser-150. 4 stretches are compositionally biased toward pro residues: residues 152 to 205, 213 to 243, 252 to 266, and 274 to 324; these read RSPP…PPPQ, RSPPGKPQGPPPQGGNQPQGPPPPPGKPQGP, QGPPPPGKPQGPPPQ, and QSPP…PQGP. A compositionally biased stretch (low complexity) spans 325–334; that stretch reads PAQGGSKSQS. Ser-330 carries O-linked (HexNAc...) serine glycosylation. The segment covering 354–392 has biased composition (pro residues); that stretch reads QGPPPPAGGNPQQPQAPPAGQPQGPPRPPQGGRPSRPPQ.

O-glycosylated. O-glycosylation on Ser-87 is prevalent in head and neck cancer patients. O-Glycosylation on Ser-330 has a 5 times prevalence in head and neck cancers. Post-translationally, proteolytically cleaved at the tripeptide Xaa-Pro-Gln, where Xaa in the P(3) position is mostly lysine. The endoprotease may be of microbial origin. In terms of processing, pyroglutamate formation occurs on terminal Gln residues of cleaved peptides. Besides on the N-terminal of mature PBR1, pyroglutamate formation found on at least Gln-58.

Its subcellular location is the secreted. The chain is Basic salivary proline-rich protein 1 (PRB1) from Homo sapiens (Human).